The following is a 725-amino-acid chain: uncharacterized protein (725 aa).

A FtsK domain is found at 363 to 556 (GTYVEIPLYS…FVTTRPEDSC (194 aa)). 382-389 (GRTRGGKS) is an ATP binding site.

It belongs to the FtsK/SpoIIIE/SftA family.

In terms of biological role, probable DNA motor protein. May track DNA in a ATP-dependent manner by generating positive supercoils in front of it and negative supercoils behind it. This is an uncharacterized protein from Nostoc sp. (strain PCC 7120 / SAG 25.82 / UTEX 2576).